The chain runs to 37 residues: Large ribosomal subunit protein bL36 (37 aa).

The protein belongs to the bacterial ribosomal protein bL36 family.

The protein is Large ribosomal subunit protein bL36 of Trichlorobacter lovleyi (strain ATCC BAA-1151 / DSM 17278 / SZ) (Geobacter lovleyi).